Here is an 85-residue protein sequence, read N- to C-terminus: Polcalcin Aln g 4 (85 aa).

EF-hand domains are found at residues 7–42 (QDQA…LGSV) and 45–77 (DEVK…NRGL). 9 residues coordinate Ca(2+): Asp20, Asn22, Asp24, Lys26, Glu31, Asp55, Asp57, Asp59, and Glu66.

The chain is Polcalcin Aln g 4 from Alnus glutinosa (European alder).